The sequence spans 492 residues: Ribose import ATP-binding protein RbsA (492 aa).

2 consecutive ABC transporter domains span residues 3 to 239 (IDMR…VGRK) and 238 to 492 (RKLE…TGGK). ATP is bound at residue 35-42 (GENGAGKS).

Belongs to the ABC transporter superfamily. Ribose importer (TC 3.A.1.2.1) family. In terms of assembly, the complex is composed of an ATP-binding protein (RbsA), two transmembrane proteins (RbsC) and a solute-binding protein (RbsB).

It is found in the cell membrane. It catalyses the reaction D-ribose(out) + ATP + H2O = D-ribose(in) + ADP + phosphate + H(+). In terms of biological role, part of the ABC transporter complex RbsABC involved in ribose import. Responsible for energy coupling to the transport system. The polypeptide is Ribose import ATP-binding protein RbsA (Streptococcus agalactiae serotype Ia (strain ATCC 27591 / A909 / CDC SS700)).